A 262-amino-acid polypeptide reads, in one-letter code: Methanethiol S-methyltransferase (262 aa).

The next 5 helical transmembrane spans lie at leucine 22 to valine 42, proline 55 to valine 75, alanine 100 to isoleucine 120, alanine 134 to isoleucine 154, and glycine 195 to leucine 215.

Belongs to the nurim family.

It localises to the membrane. The enzyme catalyses methanethiol + S-adenosyl-L-methionine = dimethyl sulfide + S-adenosyl-L-homocysteine + H(+). In terms of biological role, catalyzes the methylation of methanethiol (MeSH) to yield dimethylsulphide (DMS). This Pseudomonas deceptionensis protein is Methanethiol S-methyltransferase.